A 145-amino-acid chain; its full sequence is Transcriptional regulator MraZ (145 aa).

SpoVT-AbrB domains are found at residues 5–50 (TFNH…ALPQ) and 81–124 (AHEV…DRAA).

It belongs to the MraZ family. Forms oligomers.

It localises to the cytoplasm. Its subcellular location is the nucleoid. This chain is Transcriptional regulator MraZ, found in Anaeromyxobacter dehalogenans (strain 2CP-1 / ATCC BAA-258).